Reading from the N-terminus, the 204-residue chain is Protein OPG030 (204 aa).

Residues 95–177 enclose the BACK domain; the sequence is FLRQYINNNI…ITYSELTNAI (83 aa).

It belongs to the orthopoxvirus OPG030 family.

The protein is Protein OPG030 (OPG30) of Homo sapiens (Human).